The sequence spans 396 residues: S-adenosylmethionine synthase (396 aa).

His14 contacts ATP. Mg(2+) is bound at residue Asp16. K(+) is bound at residue Glu42. Residues Glu55 and Gln98 each coordinate L-methionine. A flexible loop region spans residues 98–108 (QSPDIALGVNE). Residues 174 to 176 (DGK), 241 to 242 (RF), Asp250, 256 to 257 (RK), Ala273, and Lys277 contribute to the ATP site. Position 250 (Asp250) interacts with L-methionine. Lys281 provides a ligand contact to L-methionine.

This sequence belongs to the AdoMet synthase family. Homotetramer; dimer of dimers. Mg(2+) serves as cofactor. K(+) is required as a cofactor.

The protein resides in the cytoplasm. It carries out the reaction L-methionine + ATP + H2O = S-adenosyl-L-methionine + phosphate + diphosphate. It functions in the pathway amino-acid biosynthesis; S-adenosyl-L-methionine biosynthesis; S-adenosyl-L-methionine from L-methionine: step 1/1. Functionally, catalyzes the formation of S-adenosylmethionine (AdoMet) from methionine and ATP. The overall synthetic reaction is composed of two sequential steps, AdoMet formation and the subsequent tripolyphosphate hydrolysis which occurs prior to release of AdoMet from the enzyme. The chain is S-adenosylmethionine synthase from Fervidobacterium nodosum (strain ATCC 35602 / DSM 5306 / Rt17-B1).